A 445-amino-acid polypeptide reads, in one-letter code: Guanosine nucleotide diphosphate dissociation inhibitor 1 (445 aa).

Belongs to the Rab GDI family. As to quaternary structure, interacts with the GDP-bound form of RABA5C (via C-terminus). In terms of tissue distribution, expressed in roots, rosette leaves, stems, floral buds and siliques.

Functionally, regulates the GDP/GTP exchange reaction of most RAB proteins by inhibiting the dissociation of GDP from them, and the subsequent binding of GTP. This is Guanosine nucleotide diphosphate dissociation inhibitor 1 (GDI1) from Arabidopsis thaliana (Mouse-ear cress).